Consider the following 156-residue polypeptide: SsrA-binding protein (156 aa).

Residues 134–156 (YDKRETLKRKEQDREMARALRKR) form a disordered region.

It belongs to the SmpB family.

Its subcellular location is the cytoplasm. In terms of biological role, required for rescue of stalled ribosomes mediated by trans-translation. Binds to transfer-messenger RNA (tmRNA), required for stable association of tmRNA with ribosomes. tmRNA and SmpB together mimic tRNA shape, replacing the anticodon stem-loop with SmpB. tmRNA is encoded by the ssrA gene; the 2 termini fold to resemble tRNA(Ala) and it encodes a 'tag peptide', a short internal open reading frame. During trans-translation Ala-aminoacylated tmRNA acts like a tRNA, entering the A-site of stalled ribosomes, displacing the stalled mRNA. The ribosome then switches to translate the ORF on the tmRNA; the nascent peptide is terminated with the 'tag peptide' encoded by the tmRNA and targeted for degradation. The ribosome is freed to recommence translation, which seems to be the essential function of trans-translation. The protein is SsrA-binding protein of Latilactobacillus sakei subsp. sakei (strain 23K) (Lactobacillus sakei subsp. sakei).